A 179-amino-acid chain; its full sequence is Ribosome maturation factor RimM (179 aa).

A PRC barrel domain is found at 100–176; that stretch reads KEEFHLLELI…FIIINPPNGL (77 aa).

This sequence belongs to the RimM family. In terms of assembly, binds ribosomal protein uS19.

Its subcellular location is the cytoplasm. Its function is as follows. An accessory protein needed during the final step in the assembly of 30S ribosomal subunit, possibly for assembly of the head region. Essential for efficient processing of 16S rRNA. May be needed both before and after RbfA during the maturation of 16S rRNA. It has affinity for free ribosomal 30S subunits but not for 70S ribosomes. This chain is Ribosome maturation factor RimM, found in Prochlorococcus marinus (strain MIT 9215).